A 240-amino-acid chain; its full sequence is Dihydromonapterin reductase (240 aa).

Tyr-152 acts as the Proton acceptor in catalysis.

This sequence belongs to the short-chain dehydrogenases/reductases (SDR) family. FolM subfamily.

The enzyme catalyses (6S)-5,6,7,8-tetrahydrofolate + NADP(+) = 7,8-dihydrofolate + NADPH + H(+). It catalyses the reaction 7,8-dihydromonapterin + NADPH + H(+) = 5,6,7,8-tetrahydromonapterin + NADP(+). Functionally, catalyzes the reduction of dihydromonapterin to tetrahydromonapterin. Also has lower activity with dihydrofolate. The sequence is that of Dihydromonapterin reductase (folM) from Escherichia coli O6:K15:H31 (strain 536 / UPEC).